The primary structure comprises 221 residues: Ribosomal RNA small subunit methyltransferase G (221 aa).

S-adenosyl-L-methionine-binding positions include G90, L95, 141–142 (VE), and R154.

Belongs to the methyltransferase superfamily. RNA methyltransferase RsmG family.

It localises to the cytoplasm. It catalyses the reaction guanosine(527) in 16S rRNA + S-adenosyl-L-methionine = N(7)-methylguanosine(527) in 16S rRNA + S-adenosyl-L-homocysteine. In terms of biological role, specifically methylates the N7 position of guanine in position 527 of 16S rRNA. The polypeptide is Ribosomal RNA small subunit methyltransferase G (Polaromonas naphthalenivorans (strain CJ2)).